The chain runs to 818 residues: Hillarin (818 aa).

The LIM zinc-binding domain occupies 9 to 76 (STCLRCSETV…SSHVPKSGPG (68 aa)). Residues 97 to 141 (FVNEQIRGTRSEVDGGPLGGSRQSTPNGYGSREISSPSQNDSDYK) form a disordered region. Residues 117 to 137 (SRQSTPNGYGSREISSPSQND) are compositionally biased toward polar residues. A coiled-coil region spans residues 216 to 272 (QDEWERELQRLTHKFEKELATSRRSRDEANILTMRHEQQKEDLEKNMTLRRSKKKES).

Belongs to the transglutaminase-like superfamily. As to quaternary structure, interacts with pnut. Localizes to the neuropil of the embryonic central nervous system (at protein level). Also detected in third instar larval brain (at protein level).

The protein localises to the cytoplasm. It is found in the cell cortex. The protein resides in the cleavage furrow. Functionally, may act as a modulator of septin function during cytokinesis in the developing nervous system. The sequence is that of Hillarin from Drosophila melanogaster (Fruit fly).